The following is a 666-amino-acid chain: Protein SLY1 (666 aa).

4 repeat units span residues 106–142, 220–257, 436–474, and 478–514. Positions 106 to 514 are 4 X approximate repeats; the sequence is KENIDIIVND…QNKSLEDGSD (409 aa).

Belongs to the STXBP/unc-18/SEC1 family. As to quaternary structure, interacts with SED5.

It is found in the cytoplasm. The protein localises to the membrane. In terms of biological role, able to suppress the functional loss of YPT1. SLY1 is essential for cell viability. May interact indirectly, or directly with YPT1. The sequence is that of Protein SLY1 (SLY1) from Saccharomyces cerevisiae (strain ATCC 204508 / S288c) (Baker's yeast).